The sequence spans 476 residues: Glycogen synthase (476 aa).

Lys-15 contributes to the ADP-alpha-D-glucose binding site.

Belongs to the glycosyltransferase 1 family. Bacterial/plant glycogen synthase subfamily.

The catalysed reaction is [(1-&gt;4)-alpha-D-glucosyl](n) + ADP-alpha-D-glucose = [(1-&gt;4)-alpha-D-glucosyl](n+1) + ADP + H(+). It participates in glycan biosynthesis; glycogen biosynthesis. Synthesizes alpha-1,4-glucan chains using ADP-glucose. The protein is Glycogen synthase of Streptococcus gordonii (strain Challis / ATCC 35105 / BCRC 15272 / CH1 / DL1 / V288).